The primary structure comprises 139 residues: Holo-[acyl-carrier-protein] synthase (139 aa).

Residues Asp8 and Glu61 each contribute to the Mg(2+) site.

The protein belongs to the P-Pant transferase superfamily. AcpS family. It depends on Mg(2+) as a cofactor.

The protein resides in the cytoplasm. The enzyme catalyses apo-[ACP] + CoA = holo-[ACP] + adenosine 3',5'-bisphosphate + H(+). In terms of biological role, transfers the 4'-phosphopantetheine moiety from coenzyme A to a Ser of acyl-carrier-protein. This Bradyrhizobium diazoefficiens (strain JCM 10833 / BCRC 13528 / IAM 13628 / NBRC 14792 / USDA 110) protein is Holo-[acyl-carrier-protein] synthase.